A 415-amino-acid chain; its full sequence is Casein kinase I isoform delta (415 aa).

Positions 9-277 (YRLGRKIGSG…YLRQLFRNLF (269 aa)) constitute a Protein kinase domain. ATP is bound by residues 15-23 (IGSGSFGDI) and Lys38. Residue Asp128 is the Proton acceptor of the active site. The interval 278–364 (HRQGFSYDYV…TSPRPVSGME (87 aa)) is centrosomal localization signal (CLS). A compositionally biased stretch (basic and acidic residues) spans 301–315 (ADDAERERRDREERL). The segment at 301–415 (ADDAERERRD…SSGLQSVVHR (115 aa)) is disordered. Residues 317–342 (HSRNPATRGLPSTASGRLRGTQEVAP) are autoinhibitory. Phosphoserine is present on residues Ser328 and Ser331. Over residues 347–358 (TPTSHTANTSPR) the composition is skewed to polar residues. Ser370 carries the phosphoserine modification. Arg375 is modified (omega-N-methylarginine). A compositionally biased stretch (polar residues) spans 380-400 (NISSSDLTGRQDTSRMSTSQI). A phosphoserine mark is found at Ser382, Ser383, Ser384, Ser407, and Ser411.

The protein belongs to the protein kinase superfamily. CK1 Ser/Thr protein kinase family. Casein kinase I subfamily. Monomer. Component of the circadian core oscillator, which includes the CRY proteins, CLOCK, or NPAS2, ARTNL/BMAL1 or ARTNL2/BMAL2, CSNK1D and/or CSNK1E, TIMELESS and the PER proteins. Interacts with DNMT1 and MAP1A. Interacts directly with PER1 and PER2 which may lead to their degradation. Interacts with MAPT/TAU, SNAPIN, DBNDD2, AIB1/NCOA3 and ESR1. Interacts with AKAP9/AKAP450; this interaction promotes centrosomal subcellular location. Binds to tubulins in mitotic cells upon DNA damage. Interacts with GJA1. Interacts with DDX3X; this interaction enhances CSNK1D kinase activity in vitro, but it is unclear whether this interaction is physiologically relevant. Interacts with FAM83A, FAM83B, FAM83E and FAM83H (via DUF1669). Post-translationally, autophosphorylated on serine and threonine residues; this autophosphorylation represses activity. Reactivated by phosphatase-mediated dephosphorylation. May be dephosphorylated by PP1.

The protein resides in the cytoplasm. Its subcellular location is the nucleus. It is found in the cytoskeleton. The protein localises to the microtubule organizing center. It localises to the centrosome. The protein resides in the perinuclear region. Its subcellular location is the cell membrane. It is found in the spindle. The protein localises to the golgi apparatus. It catalyses the reaction L-seryl-[protein] + ATP = O-phospho-L-seryl-[protein] + ADP + H(+). The catalysed reaction is L-threonyl-[protein] + ATP = O-phospho-L-threonyl-[protein] + ADP + H(+). It carries out the reaction L-seryl-[tau protein] + ATP = O-phospho-L-seryl-[tau protein] + ADP + H(+). The enzyme catalyses L-threonyl-[tau protein] + ATP = O-phospho-L-threonyl-[tau protein] + ADP + H(+). Its activity is regulated as follows. Drug-mediated inhibition leads to a delay of the oscillations with the magnitude of this effect dependent upon the timing of drug administration. Inhibited by phosphorylation. Exhibits substrate-dependent heparin activation. Its function is as follows. Essential serine/threonine-protein kinase that regulates diverse cellular growth and survival processes including Wnt signaling, DNA repair and circadian rhythms. It can phosphorylate a large number of proteins. Casein kinases are operationally defined by their preferential utilization of acidic proteins such as caseins as substrates. Phosphorylates connexin-43/GJA1, MAP1A, SNAPIN, MAPT/TAU, TOP2A, DCK, HIF1A, EIF6, p53/TP53, DVL2, DVL3, ESR1, AIB1/NCOA3, DNMT1, PKD2, YAP1, PER1 and PER2. Central component of the circadian clock. In balance with PP1, determines the circadian period length through the regulation of the speed and rhythmicity of PER1 and PER2 phosphorylation. Controls PER1 and PER2 nuclear transport and degradation. YAP1 phosphorylation promotes its SCF(beta-TRCP) E3 ubiquitin ligase-mediated ubiquitination and subsequent degradation. DNMT1 phosphorylation reduces its DNA-binding activity. Phosphorylation of ESR1 and AIB1/NCOA3 stimulates their activity and coactivation. Phosphorylation of DVL2 and DVL3 regulates WNT3A signaling pathway that controls neurite outgrowth. Phosphorylates NEDD9/HEF1. EIF6 phosphorylation promotes its nuclear export. Triggers down-regulation of dopamine receptors in the forebrain. Activates DCK in vitro by phosphorylation. TOP2A phosphorylation favors DNA cleavable complex formation. May regulate the formation of the mitotic spindle apparatus in extravillous trophoblast. Modulates connexin-43/GJA1 gap junction assembly by phosphorylation. Probably involved in lymphocyte physiology. Regulates fast synaptic transmission mediated by glutamate. The chain is Casein kinase I isoform delta (CSNK1D) from Bos taurus (Bovine).